Consider the following 547-residue polypeptide: Sesterfisheric acid synthase (547 aa).

A helical membrane pass occupies residues 19–39; it reads IMGCSLGTGLLVSMIIYNYFF. N-linked (GlcNAc...) asparagine glycans are attached at residues Asn-341 and Asn-404. Cys-490 provides a ligand contact to heme.

This sequence belongs to the cytochrome P450 family. Heme is required as a cofactor.

Its subcellular location is the membrane. It catalyses the reaction sesterfisherol + 3 reduced [NADPH--hemoprotein reductase] + 3 O2 = sesterfisherate + 3 oxidized [NADPH--hemoprotein reductase] + 4 H2O + 4 H(+). Its pathway is secondary metabolite biosynthesis; terpenoid biosynthesis. Its function is as follows. Cytochrome P450 monooxygenase; part of the gene cluster that mediates the biosynthesis of sesterfisheric acid. The bifunctional terpene synthase NfSS converts DMAPP and IPP, and also GGPP, into sesterfisherol. The C-terminal prenyltransferase (PT) domain of NfSS catalyzes formation of GFPP, whereas the N-terminal terpene cyclase (TC) domain catalyzes the cyclization of GFPP to sesterfisherol. The cytochrome P450 monooxygenase NfP450 then catalyzes oxidative modifications of sesterfisherol into sesterfisheric acid. In Neosartorya fischeri (strain ATCC 1020 / DSM 3700 / CBS 544.65 / FGSC A1164 / JCM 1740 / NRRL 181 / WB 181) (Aspergillus fischerianus), this protein is Sesterfisheric acid synthase.